A 461-amino-acid chain; its full sequence is Coronin-1A (461 aa).

Serine 2 carries the N-acetylserine modification. Serine 2 bears the Phosphoserine; by PKC mark. 7 WD repeats span residues 13-63 (HVFG…LVLP), 73-110 (NAPTVCGHTAPVLDIAWCPHNDNVIASGSEDCTVMVWE), 123-160 (PVVTLEGHTKRVGIVAWHTTAQNVLLSAGCDNVIMVWD), 164-204 (GAAM…RIIE), 207-251 (KGTV…ALWD), 258-296 (PLSLQELDTSSGVLLPFFDPDTNIVYLCGKGDSSIRYFE), and 302-349 (PFLH…EPIA). A compositionally biased stretch (basic and acidic residues) spans 403-418 (ELRVNRGLDTGRRRAA). The tract at residues 403–432 (ELRVNRGLDTGRRRAAPEASGTPSSDAVSR) is disordered. Residue threonine 412 is modified to Phosphothreonine; by PKC. At serine 422 the chain carries Phosphoserine. A coiled-coil region spans residues 424–460 (TPSSDAVSRLEEEMRKLQATVQELQKRLDRLEETVQA). Lysine 449 carries the post-translational modification N6-acetyllysine.

It belongs to the WD repeat coronin family. In terms of assembly, binds actin. Post-translationally, phosphorylation at Thr-412 by PKC strongly down-regulates the association with actin. In terms of processing, polyubiquitinated by RNF128 with 'Lys-48'-linked chains, leading to proteasomal degradation. Expressed in brain, thymus, spleen, bone marrow and lymph node. Low in lung and gut.

It is found in the cytoplasm. Its subcellular location is the cytoskeleton. The protein localises to the cell cortex. The protein resides in the cytoplasmic vesicle. It localises to the phagosome membrane. May be a crucial component of the cytoskeleton of highly motile cells, functioning both in the invagination of large pieces of plasma membrane, as well as in forming protrusions of the plasma membrane involved in cell locomotion. In mycobacteria-infected cells, its retention on the phagosomal membrane prevents fusion between phagosomes and lysosomes. This Homo sapiens (Human) protein is Coronin-1A (CORO1A).